The following is a 345-amino-acid chain: Uroporphyrinogen decarboxylase (345 aa).

Residues 24 to 28 (RQAGR), Asp-74, Tyr-150, Ser-205, and His-318 contribute to the substrate site.

It belongs to the uroporphyrinogen decarboxylase family. As to quaternary structure, homodimer.

The protein localises to the cytoplasm. It carries out the reaction uroporphyrinogen III + 4 H(+) = coproporphyrinogen III + 4 CO2. Its pathway is porphyrin-containing compound metabolism; protoporphyrin-IX biosynthesis; coproporphyrinogen-III from 5-aminolevulinate: step 4/4. Its function is as follows. Catalyzes the decarboxylation of four acetate groups of uroporphyrinogen-III to yield coproporphyrinogen-III. The protein is Uroporphyrinogen decarboxylase of Dichelobacter nodosus (strain VCS1703A).